A 186-amino-acid chain; its full sequence is NADH-quinone oxidoreductase subunit B 2 (186 aa).

The segment at 1–27 (MPSFTQPHSAPRNFQFPGQQRQGDPTM) is disordered. Positions 65, 66, 130, and 160 each coordinate [4Fe-4S] cluster.

This sequence belongs to the complex I 20 kDa subunit family. In terms of assembly, NDH-1 is composed of 14 different subunits. Subunits NuoB, C, D, E, F, and G constitute the peripheral sector of the complex. Requires [4Fe-4S] cluster as cofactor.

The protein resides in the cell inner membrane. The catalysed reaction is a quinone + NADH + 5 H(+)(in) = a quinol + NAD(+) + 4 H(+)(out). Functionally, NDH-1 shuttles electrons from NADH, via FMN and iron-sulfur (Fe-S) centers, to quinones in the respiratory chain. The immediate electron acceptor for the enzyme in this species is believed to be ubiquinone. Couples the redox reaction to proton translocation (for every two electrons transferred, four hydrogen ions are translocated across the cytoplasmic membrane), and thus conserves the redox energy in a proton gradient. This Rhizobium etli (strain ATCC 51251 / DSM 11541 / JCM 21823 / NBRC 15573 / CFN 42) protein is NADH-quinone oxidoreductase subunit B 2.